Reading from the N-terminus, the 160-residue chain is Crossover junction endodeoxyribonuclease RuvC (160 aa).

Catalysis depends on residues aspartate 7, glutamate 73, and aspartate 145. 3 residues coordinate Mg(2+): aspartate 7, glutamate 73, and aspartate 145.

This sequence belongs to the RuvC family. Homodimer which binds Holliday junction (HJ) DNA. The HJ becomes 2-fold symmetrical on binding to RuvC with unstacked arms; it has a different conformation from HJ DNA in complex with RuvA. In the full resolvosome a probable DNA-RuvA(4)-RuvB(12)-RuvC(2) complex forms which resolves the HJ. Mg(2+) serves as cofactor.

The protein localises to the cytoplasm. It carries out the reaction Endonucleolytic cleavage at a junction such as a reciprocal single-stranded crossover between two homologous DNA duplexes (Holliday junction).. Functionally, the RuvA-RuvB-RuvC complex processes Holliday junction (HJ) DNA during genetic recombination and DNA repair. Endonuclease that resolves HJ intermediates. Cleaves cruciform DNA by making single-stranded nicks across the HJ at symmetrical positions within the homologous arms, yielding a 5'-phosphate and a 3'-hydroxyl group; requires a central core of homology in the junction. The consensus cleavage sequence is 5'-(A/T)TT(C/G)-3'. Cleavage occurs on the 3'-side of the TT dinucleotide at the point of strand exchange. HJ branch migration catalyzed by RuvA-RuvB allows RuvC to scan DNA until it finds its consensus sequence, where it cleaves and resolves the cruciform DNA. This is Crossover junction endodeoxyribonuclease RuvC from Synechococcus sp. (strain CC9311).